The chain runs to 189 residues: Peptidyl-tRNA hydrolase (189 aa).

Position 15 (Y15) interacts with tRNA. H20 acts as the Proton acceptor in catalysis. Residues F66, N68, and N114 each contribute to the tRNA site.

It belongs to the PTH family. Monomer.

It is found in the cytoplasm. The catalysed reaction is an N-acyl-L-alpha-aminoacyl-tRNA + H2O = an N-acyl-L-amino acid + a tRNA + H(+). In terms of biological role, hydrolyzes ribosome-free peptidyl-tRNAs (with 1 or more amino acids incorporated), which drop off the ribosome during protein synthesis, or as a result of ribosome stalling. Functionally, catalyzes the release of premature peptidyl moieties from peptidyl-tRNA molecules trapped in stalled 50S ribosomal subunits, and thus maintains levels of free tRNAs and 50S ribosomes. This is Peptidyl-tRNA hydrolase from Streptococcus pneumoniae (strain P1031).